Here is a 331-residue protein sequence, read N- to C-terminus: Ferrochelatase (331 aa).

Residues H187 and E286 each contribute to the Fe cation site.

This sequence belongs to the ferrochelatase family.

Its subcellular location is the cytoplasm. It carries out the reaction heme b + 2 H(+) = protoporphyrin IX + Fe(2+). The protein operates within porphyrin-containing compound metabolism; protoheme biosynthesis; protoheme from protoporphyrin-IX: step 1/1. Functionally, catalyzes the ferrous insertion into protoporphyrin IX. This is Ferrochelatase from Legionella pneumophila (strain Paris).